The primary structure comprises 103 residues: UPF0145 protein RSKD131_1772 (103 aa).

Belongs to the UPF0145 family.

The protein is UPF0145 protein RSKD131_1772 of Cereibacter sphaeroides (strain KD131 / KCTC 12085) (Rhodobacter sphaeroides).